Consider the following 175-residue polypeptide: Translation initiation factor IF-3 (175 aa).

The protein belongs to the IF-3 family. As to quaternary structure, monomer.

The protein resides in the cytoplasm. IF-3 binds to the 30S ribosomal subunit and shifts the equilibrium between 70S ribosomes and their 50S and 30S subunits in favor of the free subunits, thus enhancing the availability of 30S subunits on which protein synthesis initiation begins. The chain is Translation initiation factor IF-3 from Aquifex aeolicus (strain VF5).